The chain runs to 772 residues: Carnitine O-palmitoyltransferase 1, muscle isoform (772 aa).

At methionine 1 to lysine 47 the chain is on the cytoplasmic side. A helical membrane pass occupies residues asparagine 48–serine 73. Topologically, residues phenylalanine 74 to glutamine 102 are mitochondrial intermembrane. The helical transmembrane segment at threonine 103 to phenylalanine 122 threads the bilayer. The Cytoplasmic portion of the chain corresponds to phenylalanine 123 to serine 772. The Proton acceptor role is filled by histidine 473. Residue glycine 555 to aspartate 567 coordinates CoA. Positions 589 and 602 each coordinate (R)-carnitine.

The protein belongs to the carnitine/choline acetyltransferase family. Strong expression in heart and skeletal muscle. No expression in liver and kidney.

It localises to the mitochondrion outer membrane. It carries out the reaction (R)-carnitine + hexadecanoyl-CoA = O-hexadecanoyl-(R)-carnitine + CoA. It functions in the pathway lipid metabolism; fatty acid beta-oxidation. In terms of biological role, catalyzes the transfer of the acyl group of long-chain fatty acid-CoA conjugates onto carnitine, an essential step for the mitochondrial uptake of long-chain fatty acids and their subsequent beta-oxidation in the mitochondrion. The sequence is that of Carnitine O-palmitoyltransferase 1, muscle isoform (CPT1B) from Homo sapiens (Human).